We begin with the raw amino-acid sequence, 88 residues long: Large ribosomal subunit protein bL27 (88 aa).

Positions M1–V23 are disordered.

This sequence belongs to the bacterial ribosomal protein bL27 family.

This chain is Large ribosomal subunit protein bL27, found in Methylorubrum populi (strain ATCC BAA-705 / NCIMB 13946 / BJ001) (Methylobacterium populi).